Consider the following 240-residue polypeptide: Protein FAM246C (240 aa).

2 disordered regions span residues 1–117 (MAEP…WRSA) and 161–240 (LPAA…TRAA). Basic and acidic residues-rich tracts occupy residues 19–31 (EVLR…RRDP) and 60–74 (AASR…KLVE). The segment covering 165–175 (SPAPSPAPRPA) has biased composition (pro residues). The segment covering 176-187 (ARPCRGRSAPLA) has biased composition (low complexity).

It belongs to the FAM246 family.

This is Protein FAM246C from Homo sapiens (Human).